A 360-amino-acid polypeptide reads, in one-letter code: DNA replication and repair protein RecF (360 aa).

30 to 37 (GQNGSGKT) provides a ligand contact to ATP.

It belongs to the RecF family.

The protein resides in the cytoplasm. The RecF protein is involved in DNA metabolism; it is required for DNA replication and normal SOS inducibility. RecF binds preferentially to single-stranded, linear DNA. It also seems to bind ATP. The sequence is that of DNA replication and repair protein RecF from Shewanella sp. (strain MR-7).